Consider the following 214-residue polypeptide: Urease accessory protein UreG (214 aa).

Residue 23–30 coordinates GTP; sequence GPVGSGKT.

The protein belongs to the SIMIBI class G3E GTPase family. UreG subfamily. Homodimer. UreD, UreF and UreG form a complex that acts as a GTP-hydrolysis-dependent molecular chaperone, activating the urease apoprotein by helping to assemble the nickel containing metallocenter of UreC. The UreE protein probably delivers the nickel.

It localises to the cytoplasm. Functionally, facilitates the functional incorporation of the urease nickel metallocenter. This process requires GTP hydrolysis, probably effectuated by UreG. The polypeptide is Urease accessory protein UreG (Bordetella pertussis (strain Tohama I / ATCC BAA-589 / NCTC 13251)).